Reading from the N-terminus, the 299-residue chain is Non-structural protein V (299 aa).

The tract at residues 40–94 (SDNPGQDRATCKEEEAGSSGLSKPCLSAIGSTEGGAPRIRGQGSGESDDDAETLG) is disordered. The interaction with host STAT1 stretch occupies residues 110–120 (YHVYDHSGEAV). Residues 133–143 (SGLDGDSTLSG) show a composition bias toward low complexity. Disordered stretches follow at residues 133 to 168 (SGLDGDSTLSGGDDESENSDVDIGEPDTEGYAITDR) and 204 to 229 (PKLGKTLNVPPPPNPSRASTSETPIK). Residues 144–160 (GDDESENSDVDIGEPDT) show a composition bias toward acidic residues. The Zn(2+) site is built by H232, C251, C255, C267, C269, C272, C276, and C279.

Belongs to the paramyxoviruses V protein family. As to quaternary structure, interacts with host IFIH1/MDA5 and DHX58/LGP2; these interactions are involved in the inhibition of the host type I interferon signaling pathway. Interacts with host TYK2; this interaction inhibits the type I interferon signaling pathway without affecting the type II pathway. Interacts with host IRF7; this interaction inhibits IRF7 translocation to the nucleus. Interacts with host CHUK. Interacts with host RELA/p65; this interaction inhibits the nuclear translocation of NF-KappaB. Interacts (via N-terminus) with host STAT1 and JAK1; these interactions inhibit STAT1 phosphorylation by Jak1 and thereby the type I interferon signaling pathway. Interacts (via C-terminus) with host STAT2; this interaction is involved in the inhibition of the host type I interferon signaling pathway. Forms a complex with host PPP1CA and PPP1CC; this interaction prevents dephosphorylation of host IFIH1/MDA5 and leads to the inhibition of the host type I interferon signaling pathway. Interacts with host IRF9; this interaction prevents the binding of IRF9 to STAT2 and thereby the type I interferon signaling pathway. Interacts with host RIGI regulatory protein (via CARDs domain) and host TRIM25 (via SPRY domain); these interactions prevent TRIM25-mediated ubiquitination of RIG-I and disrupts downstream RIG-I signaling.

It is found in the host cytoplasm. Plays an essential role in the inhibition of host immune response. Prevents the establishment of cellular antiviral state by blocking interferon-alpha/beta (IFN-alpha/beta) production and signaling pathway. Interacts with host IFIH1/MDA5 and DHX58/LGP2 to inhibit the transduction pathway involved in the activation of IFN-beta promoter, thus protecting the virus against cell antiviral state. Blocks the type I interferon signaling pathway by interacting with host TYK2 and thereby inhibiting downstream STAT1 and STAT2 phosphorylation. Blocks the type I interferon signaling pathway by disrupting the RIG-I signaling pathway. Moderately affects the type II interferon signaling. Prevents PP1alpha/gamma-mediated dephosphorylation of host IFIH1/MDA5 and thus blocks its activation. In Homo sapiens (Human), this protein is Non-structural protein V (P/V).